Here is a 474-residue protein sequence, read N- to C-terminus: Probable dipeptidase B (474 aa).

The active site involves C11.

This sequence belongs to the peptidase C69 family.

It carries out the reaction an L-aminoacyl-L-amino acid + H2O = 2 an L-alpha-amino acid. The protein is Probable dipeptidase B (pepDB) of Lactococcus lactis subsp. lactis (strain IL1403) (Streptococcus lactis).